We begin with the raw amino-acid sequence, 265 residues long: SPbeta prophage-derived uncharacterized protein YomU (265 aa).

The segment at 238–265 (KADGTKGVVTSDEGTGSSQSSDLGGTTE) is disordered. Polar residues predominate over residues 249–265 (DEGTGSSQSSDLGGTTE).

The sequence is that of SPbeta prophage-derived uncharacterized protein YomU (yomU) from Bacillus subtilis (strain 168).